Consider the following 293-residue polypeptide: Glutamyl-Q tRNA(Asp) synthetase (293 aa).

L-glutamate is bound by residues 8 to 12 (RFAPT) and glutamate 44. Positions 11-21 (PTPSGYLHFGS) match the 'HIGH' region motif. Zn(2+) is bound by residues cysteine 100, cysteine 102, tyrosine 114, and cysteine 118. Positions 171 and 189 each coordinate L-glutamate. The short motif at 227–231 (KLGKS) is the 'KMSKS' region element. Lysine 230 contacts ATP.

The protein belongs to the class-I aminoacyl-tRNA synthetase family. GluQ subfamily. Requires Zn(2+) as cofactor.

Catalyzes the tRNA-independent activation of glutamate in presence of ATP and the subsequent transfer of glutamate onto a tRNA(Asp). Glutamate is transferred on the 2-amino-5-(4,5-dihydroxy-2-cyclopenten-1-yl) moiety of the queuosine in the wobble position of the QUC anticodon. The protein is Glutamyl-Q tRNA(Asp) synthetase of Pseudomonas aeruginosa (strain LESB58).